The chain runs to 494 residues: NAD(P)H-quinone oxidoreductase subunit 2 B, chloroplastic (494 aa).

Helical transmembrane passes span 6-26, 39-59, 81-101, 106-126, 131-151, 166-186, 211-231, 277-297, 305-325, 336-356, 377-397, 413-433, and 468-488; these read LLLF…GLIL, TPWF…VLLF, IFRF…VEYI, MAIT…MVLC, LVTI…LSGY, LLMG…LYGL, ILIA…LVPF, WHLL…LIAI, MLAY…IAGD, YMLF…LFGL, AFSL…AGFF, LLVS…LKII, and MIVC…IIAI.

The protein belongs to the complex I subunit 2 family. In terms of assembly, NDH is composed of at least 16 different subunits, 5 of which are encoded in the nucleus.

The protein resides in the plastid. It is found in the chloroplast thylakoid membrane. The catalysed reaction is a plastoquinone + NADH + (n+1) H(+)(in) = a plastoquinol + NAD(+) + n H(+)(out). The enzyme catalyses a plastoquinone + NADPH + (n+1) H(+)(in) = a plastoquinol + NADP(+) + n H(+)(out). NDH shuttles electrons from NAD(P)H:plastoquinone, via FMN and iron-sulfur (Fe-S) centers, to quinones in the photosynthetic chain and possibly in a chloroplast respiratory chain. The immediate electron acceptor for the enzyme in this species is believed to be plastoquinone. Couples the redox reaction to proton translocation, and thus conserves the redox energy in a proton gradient. This is NAD(P)H-quinone oxidoreductase subunit 2 B, chloroplastic from Cycas taitungensis (Prince sago).